A 119-amino-acid polypeptide reads, in one-letter code: Large ribosomal subunit protein bL20c (119 aa).

It belongs to the bacterial ribosomal protein bL20 family.

It localises to the plastid. The protein resides in the chloroplast. Its function is as follows. Binds directly to 23S ribosomal RNA and is necessary for the in vitro assembly process of the 50S ribosomal subunit. It is not involved in the protein synthesizing functions of that subunit. This is Large ribosomal subunit protein bL20c from Saccharum hybrid (Sugarcane).